The chain runs to 313 residues: MVIRHDWSREEVRSLLDLPFPELLFRAAAIHRACFDPREVQISTLLSIKTGGCPEDCAYCPQAAQYDTGVEASRLMRVDAVLEEARAAKAAGASRFCMGAAWRSPKERDMDTVCEMIEGVKALGMESCVTLGMLTDQQALRLKQAGLDYYNHNLDTSPEYYGAVISTRTYEDRLETLAHVRDAGINVCCGGILGLGEGLDDRAGLIVALANLPRHPESVPINALVQVEGTPLKGQEPVDTIDFVRMIAVARITMPHARVRLSAGREAMTDEAQALCFLAGANSIFYGEKLLTTGNPAAERDRALLSRLGMRLV.

One can recognise a Radical SAM core domain in the interval 38–262 (REVQISTLLS…TMPHARVRLS (225 aa)). 3 residues coordinate [4Fe-4S] cluster: Cys53, Cys57, and Cys60. [2Fe-2S] cluster contacts are provided by Cys97, Cys128, Cys188, and Arg260.

This sequence belongs to the radical SAM superfamily. Biotin synthase family. Homodimer. Requires [4Fe-4S] cluster as cofactor. It depends on [2Fe-2S] cluster as a cofactor.

It carries out the reaction (4R,5S)-dethiobiotin + (sulfur carrier)-SH + 2 reduced [2Fe-2S]-[ferredoxin] + 2 S-adenosyl-L-methionine = (sulfur carrier)-H + biotin + 2 5'-deoxyadenosine + 2 L-methionine + 2 oxidized [2Fe-2S]-[ferredoxin]. It functions in the pathway cofactor biosynthesis; biotin biosynthesis; biotin from 7,8-diaminononanoate: step 2/2. Catalyzes the conversion of dethiobiotin (DTB) to biotin by the insertion of a sulfur atom into dethiobiotin via a radical-based mechanism. This chain is Biotin synthase, found in Granulibacter bethesdensis (strain ATCC BAA-1260 / CGDNIH1).